Consider the following 434-residue polypeptide: Chaperone SurA (434 aa).

An N-terminal signal peptide occupies residues 1-22; it reads MKPSKHLIFALFALAISQPTMA. 2 PpiC domains span residues 173–274 and 283–383; these read DVEY…KIMD and IEEV…QLEE.

Its subcellular location is the periplasm. The catalysed reaction is [protein]-peptidylproline (omega=180) = [protein]-peptidylproline (omega=0). Its function is as follows. Chaperone involved in the correct folding and assembly of outer membrane proteins. Recognizes specific patterns of aromatic residues and the orientation of their side chains, which are found more frequently in integral outer membrane proteins. May act in both early periplasmic and late outer membrane-associated steps of protein maturation. The sequence is that of Chaperone SurA from Shewanella oneidensis (strain ATCC 700550 / JCM 31522 / CIP 106686 / LMG 19005 / NCIMB 14063 / MR-1).